We begin with the raw amino-acid sequence, 147 residues long: MATVYDVPADLLIKRVAERLKDMVAPPEWAKYVKTGVHKERSPEQDDWWYLRLASIFRRVYIDGPVGIERLRTFYGGRKRRGSKPPKFRKGSGAIVRNALHQLEQLGFVKKTREGRVVTPMGRSFLDKVATELKSELVSEIPALEKY.

The protein belongs to the eukaryotic ribosomal protein eS19 family. In terms of assembly, part of the 30S ribosomal subunit.

Its function is as follows. May be involved in maturation of the 30S ribosomal subunit. The polypeptide is Small ribosomal subunit protein eS19 (Archaeoglobus fulgidus (strain ATCC 49558 / DSM 4304 / JCM 9628 / NBRC 100126 / VC-16)).